We begin with the raw amino-acid sequence, 260 residues long: Vesicle-associated membrane protein 7B (260 aa).

Residues 1–189 (MPIIYSLVAR…KCAMWWKNVK (189 aa)) are Cytoplasmic-facing. The Longin domain maps to 7–110 (LVARGSSVLA…GMNSDFSRTL (104 aa)). The region spanning 125 to 186 (TMSRTMAEID…KQLKCAMWWK (62 aa)) is the v-SNARE coiled-coil homology domain. A helical; Anchor for type IV membrane protein membrane pass occupies residues 190-210 (LMLVLGAIVLIIIFIIVMSYC). At 211 to 260 (DGFRSGSKCRSSPSSNSTPTPTPTETPTPTPTPTSTPTPSQLLETLLNQF) the chain is on the vesicular side. The tract at residues 215–250 (SGSKCRSSPSSNSTPTPTPTETPTPTPTPTSTPTPS) is disordered. Residues 230–246 (TPTPTETPTPTPTPTST) show a composition bias toward pro residues.

This sequence belongs to the synaptobrevin family.

It is found in the cytoplasmic vesicle. Its subcellular location is the secretory vesicle membrane. The protein localises to the golgi apparatus. The protein resides in the trans-Golgi network membrane. It localises to the late endosome membrane. It is found in the lysosome membrane. Its subcellular location is the endoplasmic reticulum membrane. The protein localises to the phagosome membrane. In terms of biological role, involved in the targeting and/or fusion of transport vesicles to their target membrane during transport of proteins from the early endosome to the lysosome. Required for heterotypic fusion of late endosomes with lysosomes and homotypic lysosomal fusion. This chain is Vesicle-associated membrane protein 7B, found in Dictyostelium discoideum (Social amoeba).